We begin with the raw amino-acid sequence, 219 residues long: Glutathione S-transferase F13 (219 aa).

Positions 2–82 (AMKLYGDEMS…YIAEKHRDKG (81 aa)) constitute a GST N-terminal domain. Glutathione-binding positions include 11–12 (SA), 40–41 (HK), 53–54 (KV), and 66–67 (ES). The GST C-terminal domain occupies 90–217 (DPKEAAIVKL…VSPGLTVAPT (128 aa)).

The protein belongs to the GST superfamily. Phi family.

The protein localises to the cytoplasm. It is found in the cytosol. It carries out the reaction RX + glutathione = an S-substituted glutathione + a halide anion + H(+). Its function is as follows. May be involved in the conjugation of reduced glutathione to a wide number of exogenous and endogenous hydrophobic electrophiles and have a detoxification role against certain herbicides. This is Glutathione S-transferase F13 (GSTF13) from Arabidopsis thaliana (Mouse-ear cress).